An 802-amino-acid polypeptide reads, in one-letter code: E3 ubiquitin-protein ligase RNF10 (802 aa).

3 stretches are compositionally biased toward low complexity: residues methionine 1–serine 31, serine 78–lysine 90, and serine 104–glycine 113. Positions methionine 1–glycine 134 are disordered. Phosphoserine is present on serine 5. Phosphoserine is present on serine 110. Residues glycine 114–arginine 124 show a composition bias toward basic and acidic residues. A Phosphoserine modification is found at serine 128. Residues cysteine 225–tyrosine 267 form an RING-type zinc finger. The segment covering aspartate 645–glutamate 654 has biased composition (polar residues). Disordered stretches follow at residues aspartate 645–leucine 664, aspartate 716–phenylalanine 753, and lysine 767–lysine 802. Positions aspartate 716–asparagine 728 are enriched in basic and acidic residues. Positions leucine 793–lysine 802 are enriched in polar residues.

It belongs to the RNF10 family. As to quaternary structure, interacts with MEOX2.

The protein resides in the cytoplasm. The protein localises to the nucleus. It catalyses the reaction S-ubiquitinyl-[E2 ubiquitin-conjugating enzyme]-L-cysteine + [acceptor protein]-L-lysine = [E2 ubiquitin-conjugating enzyme]-L-cysteine + N(6)-ubiquitinyl-[acceptor protein]-L-lysine.. The protein operates within protein modification; protein ubiquitination. Its function is as follows. E3 ubiquitin-protein ligase that catalyzes monoubiquitination of 40S ribosomal proteins RPS2/us5 and RPS3/us3 in response to ribosome stalling. Part of a ribosome quality control that takes place when ribosomes have stalled during translation initiation (iRQC): RNF10 acts by mediating monoubiquitination of RPS2/us5 and RPS3/us3, promoting their degradation by the proteasome. Also promotes ubiquitination of 40S ribosomal proteins in response to ribosome stalling during translation elongation. The action of RNF10 in iRQC is counteracted by USP10. May also act as a transcriptional factor involved in the regulation of MAG (Myelin-associated glycoprotein) expression. Acts as a regulator of Schwann cell differentiation and myelination. The chain is E3 ubiquitin-protein ligase RNF10 from Rattus norvegicus (Rat).